The sequence spans 286 residues: Phosphatidylserine decarboxylase proenzyme (286 aa).

Catalysis depends on charge relay system; for autoendoproteolytic cleavage activity residues Asp-89, His-146, and Ser-252. Residue Ser-252 is the Schiff-base intermediate with substrate; via pyruvic acid; for decarboxylase activity of the active site. Pyruvic acid (Ser); by autocatalysis is present on Ser-252.

The protein belongs to the phosphatidylserine decarboxylase family. PSD-B subfamily. Prokaryotic type I sub-subfamily. Heterodimer of a large membrane-associated beta subunit and a small pyruvoyl-containing alpha subunit. The cofactor is pyruvate. In terms of processing, is synthesized initially as an inactive proenzyme. Formation of the active enzyme involves a self-maturation process in which the active site pyruvoyl group is generated from an internal serine residue via an autocatalytic post-translational modification. Two non-identical subunits are generated from the proenzyme in this reaction, and the pyruvate is formed at the N-terminus of the alpha chain, which is derived from the carboxyl end of the proenzyme. The autoendoproteolytic cleavage occurs by a canonical serine protease mechanism, in which the side chain hydroxyl group of the serine supplies its oxygen atom to form the C-terminus of the beta chain, while the remainder of the serine residue undergoes an oxidative deamination to produce ammonia and the pyruvoyl prosthetic group on the alpha chain. During this reaction, the Ser that is part of the protease active site of the proenzyme becomes the pyruvoyl prosthetic group, which constitutes an essential element of the active site of the mature decarboxylase.

It localises to the cell membrane. It carries out the reaction a 1,2-diacyl-sn-glycero-3-phospho-L-serine + H(+) = a 1,2-diacyl-sn-glycero-3-phosphoethanolamine + CO2. Its pathway is phospholipid metabolism; phosphatidylethanolamine biosynthesis; phosphatidylethanolamine from CDP-diacylglycerol: step 2/2. Catalyzes the formation of phosphatidylethanolamine (PtdEtn) from phosphatidylserine (PtdSer). In Shewanella loihica (strain ATCC BAA-1088 / PV-4), this protein is Phosphatidylserine decarboxylase proenzyme.